Reading from the N-terminus, the 152-residue chain is Small ribosomal subunit protein uS11 (152 aa).

It belongs to the universal ribosomal protein uS11 family. Component of the small ribosomal subunit. Part of the small subunit (SSU) processome, composed of more than 70 proteins and the RNA chaperone small nucleolar RNA (snoRNA) U3.

It is found in the cytoplasm. It localises to the nucleus. Its subcellular location is the nucleolus. In terms of biological role, component of the small ribosomal subunit. The ribosome is a large ribonucleoprotein complex responsible for the synthesis of proteins in the cell. Part of the small subunit (SSU) processome, first precursor of the small eukaryotic ribosomal subunit. During the assembly of the SSU processome in the nucleolus, many ribosome biogenesis factors, an RNA chaperone and ribosomal proteins associate with the nascent pre-rRNA and work in concert to generate RNA folding, modifications, rearrangements and cleavage as well as targeted degradation of pre-ribosomal RNA by the RNA exosome. The chain is Small ribosomal subunit protein uS11 (rps-14) from Caenorhabditis elegans.